Consider the following 511-residue polypeptide: Centrosomal protein CCDC61 (511 aa).

N-acetylmethionine is present on Met1. The interval Met1–Pro143 is head domain. Coiled-coil stretches lie at residues Ile176 to Glu203 and Ser246 to Glu273. Residue Thr283 is modified to Phosphothreonine. Disordered stretches follow at residues Leu284–Arg413 and Ser429–Val476. Basic and acidic residues predominate over residues Arg290–Thr302. Residues Ser330 and Ser332 each carry the phosphoserine modification. The segment covering Lys360–Met369 has biased composition (low complexity). Phosphoserine is present on residues Ser371 and Ser374. The span at Ser433–Gly442 shows a compositional bias: basic residues. Ser446 is modified (phosphoserine). Residues Pro449 to Thr458 are compositionally biased toward polar residues. Ser472 carries the post-translational modification Phosphoserine.

This sequence belongs to the CCDC61 family. Forms homodimers (via head domain). Interacts with CEP170. Interacts with PCM1 and CEP131. Binds tubulin.

Its subcellular location is the cytoplasm. It is found in the cytoskeleton. The protein localises to the microtubule organizing center. It localises to the centrosome. The protein resides in the centriolar satellite. Its subcellular location is the cilium basal body. In terms of biological role, microtubule-binding centrosomal protein required for centriole cohesion, independently of the centrosome-associated protein/CEP250 and rootletin/CROCC linker. In interphase, required for anchoring microtubule at the mother centriole subdistal appendages and for centrosome positioning. During mitosis, may be involved in spindle assembly and chromatin alignment by regulating the organization of spindle microtubules into a symmetrical structure. Plays a non-essential role in ciliogenesis. This chain is Centrosomal protein CCDC61, found in Mus musculus (Mouse).